A 379-amino-acid chain; its full sequence is MNNTEFYDRLGVSKDASQDEIKKAYRRMSKKYHPDINKETGAEEKYKEVQEAYETLSDTQKRAAYDQYGAAGANGGFGGFDGGGFGGFDGGGFGGFEDIFSSFFGGGGMRNPNAPRQGDDLQYRVNLSFEEAIFGAEKEVSYNRESSCHTCSGSGAKPGTSPVTCQKCHGSGVINVDTQTPLGTMRRQVTCDVCQGSGQEIKEKCPTCHGTGHEKKTHKVSVKIPAGVETGQQIRLTGQGEAGFNGGPYGDLFVIINVLPSQQFERNGSTIYYTLNISFVQAALGDTIDIPTVHGAVEMSIPAGTQTGKTFRLRGKGAPKLRGGGQGDQHVTVNIVTPTKLNDAQKEALHAFAEASGDKMVHPKKKGFFDKVKDALDVD.

Residues 5 to 69 (EFYDRLGVSK…QKRAAYDQYG (65 aa)) enclose the J domain. A CR-type zinc finger spans residues 135–217 (GAEKEVSYNR…CHGTGHEKKT (83 aa)). Zn(2+) is bound by residues Cys-148, Cys-151, Cys-165, Cys-168, Cys-191, Cys-194, Cys-205, and Cys-208. CXXCXGXG motif repeat units follow at residues 148 to 155 (CHTCSGSG), 165 to 172 (CQKCHGSG), 191 to 198 (CDVCQGSG), and 205 to 212 (CPTCHGTG).

It belongs to the DnaJ family. As to quaternary structure, homodimer. Zn(2+) serves as cofactor.

The protein resides in the cytoplasm. Participates actively in the response to hyperosmotic and heat shock by preventing the aggregation of stress-denatured proteins and by disaggregating proteins, also in an autonomous, DnaK-independent fashion. Unfolded proteins bind initially to DnaJ; upon interaction with the DnaJ-bound protein, DnaK hydrolyzes its bound ATP, resulting in the formation of a stable complex. GrpE releases ADP from DnaK; ATP binding to DnaK triggers the release of the substrate protein, thus completing the reaction cycle. Several rounds of ATP-dependent interactions between DnaJ, DnaK and GrpE are required for fully efficient folding. Also involved, together with DnaK and GrpE, in the DNA replication of plasmids through activation of initiation proteins. The polypeptide is Chaperone protein DnaJ (Streptococcus agalactiae serotype V (strain ATCC BAA-611 / 2603 V/R)).